The chain runs to 43 residues: Protein PsbN (43 aa).

The chain crosses the membrane as a helical span at residues 7–27 (LSIAIGSILLVITGFAIYTAF).

It belongs to the PsbN family.

The protein localises to the cellular thylakoid membrane. In terms of biological role, may play a role in photosystem I and II biogenesis. The protein is Protein PsbN of Crocosphaera subtropica (strain ATCC 51142 / BH68) (Cyanothece sp. (strain ATCC 51142)).